The primary structure comprises 127 residues: Glycine cleavage system H protein (127 aa).

One can recognise a Lipoyl-binding domain in the interval Lys22 to Glu104. Residue Lys63 is modified to N6-lipoyllysine.

The protein belongs to the GcvH family. The glycine cleavage system is composed of four proteins: P, T, L and H. Requires (R)-lipoate as cofactor.

The glycine cleavage system catalyzes the degradation of glycine. The H protein shuttles the methylamine group of glycine from the P protein to the T protein. In terms of biological role, is also involved in protein lipoylation via its role as an octanoyl/lipoyl carrier protein intermediate. This Geobacillus sp. (strain WCH70) protein is Glycine cleavage system H protein.